The primary structure comprises 709 residues: Elongation factor G (709 aa).

The 290-residue stretch at 6-295 (KFLRNIGIMA…AVCTYLPSPL (290 aa)) folds into the tr-type G domain. GTP-binding positions include 15–22 (AHIDAGKT), 92–96 (DTPGH), and 146–149 (NKMD).

Belongs to the TRAFAC class translation factor GTPase superfamily. Classic translation factor GTPase family. EF-G/EF-2 subfamily.

It localises to the cytoplasm. Catalyzes the GTP-dependent ribosomal translocation step during translation elongation. During this step, the ribosome changes from the pre-translocational (PRE) to the post-translocational (POST) state as the newly formed A-site-bound peptidyl-tRNA and P-site-bound deacylated tRNA move to the P and E sites, respectively. Catalyzes the coordinated movement of the two tRNA molecules, the mRNA and conformational changes in the ribosome. The polypeptide is Elongation factor G (Amoebophilus asiaticus (strain 5a2)).